The primary structure comprises 317 residues: tRNA-cytidine(32) 2-sulfurtransferase (317 aa).

The PP-loop motif signature appears at 63–68 (SGGKDS). [4Fe-4S] cluster is bound by residues Cys138, Cys141, and Cys229.

This sequence belongs to the TtcA family. In terms of assembly, homodimer. Mg(2+) is required as a cofactor. Requires [4Fe-4S] cluster as cofactor.

Its subcellular location is the cytoplasm. The enzyme catalyses cytidine(32) in tRNA + S-sulfanyl-L-cysteinyl-[cysteine desulfurase] + AH2 + ATP = 2-thiocytidine(32) in tRNA + L-cysteinyl-[cysteine desulfurase] + A + AMP + diphosphate + H(+). It participates in tRNA modification. Functionally, catalyzes the ATP-dependent 2-thiolation of cytidine in position 32 of tRNA, to form 2-thiocytidine (s(2)C32). The sulfur atoms are provided by the cysteine/cysteine desulfurase (IscS) system. The chain is tRNA-cytidine(32) 2-sulfurtransferase from Janthinobacterium sp. (strain Marseille) (Minibacterium massiliensis).